The primary structure comprises 150 residues: Large ribosomal subunit protein uL11 (150 aa).

The protein belongs to the universal ribosomal protein uL11 family. In terms of assembly, part of the ribosomal stalk of the 50S ribosomal subunit. Interacts with L10 and the large rRNA to form the base of the stalk. L10 forms an elongated spine to which L12 dimers bind in a sequential fashion forming a multimeric L10(L12)X complex. Post-translationally, one or more lysine residues are methylated.

Functionally, forms part of the ribosomal stalk which helps the ribosome interact with GTP-bound translation factors. In Ureaplasma urealyticum serovar 10 (strain ATCC 33699 / Western), this protein is Large ribosomal subunit protein uL11.